We begin with the raw amino-acid sequence, 188 residues long: Large ribosomal subunit protein eL18 (188 aa).

A Glycyl lysine isopeptide (Lys-Gly) (interchain with G-Cter in SUMO2) cross-link involves residue lysine 119. Serine 130 carries the phosphoserine modification. Residues 151–188 (HFGKAPGTPHSHTKPYVRSKGRKFERARGRRASRGYKN) form a disordered region. Threonine 158 is subject to Phosphothreonine. 2 stretches are compositionally biased toward basic residues: residues 161–171 (SHTKPYVRSKG) and 178–188 (RGRRASRGYKN). Lysine 164 is covalently cross-linked (Glycyl lysine isopeptide (Lys-Gly) (interchain with G-Cter in SUMO2)).

It belongs to the eukaryotic ribosomal protein eL18 family. As to quaternary structure, component of the large ribosomal subunit.

Its subcellular location is the cytoplasm. It localises to the cytosol. The protein resides in the rough endoplasmic reticulum. In terms of biological role, component of the large ribosomal subunit. The ribosome is a large ribonucleoprotein complex responsible for the synthesis of proteins in the cell. The polypeptide is Large ribosomal subunit protein eL18 (RPL18) (Homo sapiens (Human)).